The chain runs to 323 residues: Zinc finger protein 784 (323 aa).

The tract at residues 1–26 is disordered; the sequence is MAAARPEAQSRSSPTPESRSQEPLDL. Polar residues predominate over residues 9–18; it reads QSRSSPTPES. Phosphoserine is present on Ser13. C2H2-type zinc fingers lie at residues 65-87, 101-123, 129-151, 196-218, 224-246, and 252-274; these read FHCA…EHGH, SRCH…YSLH, YRCA…QHRH, FACR…ERVH, YHCG…ARIH, and FRCT…QRTH. The tract at residues 269-323 is disordered; the sequence is KHQRTHFHGPGPGLGDSGGQLGSSAAEGSGSGCGVGDPAEEGRGETAKVKVEADQ. Gly residues predominate over residues 278-289; sequence PGPGLGDSGGQL. Basic and acidic residues predominate over residues 308-323; the sequence is EEGRGETAKVKVEADQ. Lys318 is covalently cross-linked (Glycyl lysine isopeptide (Lys-Gly) (interchain with G-Cter in SUMO2)).

This sequence belongs to the krueppel C2H2-type zinc-finger protein family.

It localises to the nucleus. Its function is as follows. May be involved in transcriptional regulation. The protein is Zinc finger protein 784 (ZNF784) of Homo sapiens (Human).